A 209-amino-acid chain; its full sequence is MKRTAVIFIEKATPSTITQFHDILSTHVLAIQEKWSFELKTFRSSIKNLPPSDTKVLYSLQLTHRDNQTVVIKNQSAIVTGQHSTDALTSNGCSSGFPEPFDNILTSKLSNIWTQRQSTKGNFGTTYKTSELIIRASNVFSSSGFKGLLLEIECTDPVSAEEFDRRVANIRAMLSEIDINDYKLNKDEMNEGKPVFLCDLAYQYVKVLD.

The protein belongs to the Mediator complex subunit 20 family. In terms of assembly, component of the Mediator complex.

The protein localises to the nucleus. Component of the Mediator complex, a coactivator involved in the regulated transcription of nearly all RNA polymerase II-dependent genes. Mediator functions as a bridge to convey information from gene-specific regulatory proteins to the basal RNA polymerase II transcription machinery. Mediator is recruited to promoters by direct interactions with regulatory proteins and serves as a scaffold for the assembly of a functional preinitiation complex with RNA polymerase II and the general transcription factors. This is Mediator of RNA polymerase II transcription subunit 20 (SRB2) from Eremothecium gossypii (strain ATCC 10895 / CBS 109.51 / FGSC 9923 / NRRL Y-1056) (Yeast).